Consider the following 489-residue polypeptide: Netrin-5 (489 aa).

An N-terminal signal peptide occupies residues 1–16; that stretch reads MPVTFALLLLLGQATA. Asn62 carries an N-linked (GlcNAc...) asparagine glycan. 15 disulfide bridges follow: Cys157/Cys166, Cys159/Cys175, Cys177/Cys186, Cys189/Cys209, Cys212/Cys221, Cys214/Cys239, Cys242/Cys251, Cys254/Cys272, Cys275/Cys287, Cys277/Cys294, Cys296/Cys305, Cys308/Cys322, Cys345/Cys418, Cys349/Cys420, and Cys364/Cys475. Laminin EGF-like domains follow at residues 157-211, 212-274, and 275-324; these read CQCH…PCLP, CSCN…ACRA, and CQCH…PCQR. Residues 345–475 enclose the NTR domain; sequence CQNYCNMSDT…LQQEERAGGC (131 aa). The disordered stretch occupies residues 470–489; the sequence is ERAGGCRGVRAPTPSPRPEH.

The protein resides in the secreted. Plays a role in neurogenesis. Prevents motor neuron cell body migration out of the neural tube. The chain is Netrin-5 (NTN5) from Homo sapiens (Human).